Here is a 767-residue protein sequence, read N- to C-terminus: Photosystem I P700 chlorophyll a apoprotein A1 (767 aa).

Positions 1-22 (MTISPPESGEKNKKVLEDPVKA) are disordered. The span at 8–22 (SGEKNKKVLEDPVKA) shows a compositional bias: basic and acidic residues. 8 helical membrane passes run 76 to 99 (IFSA…FHGA), 162 to 185 (LMAL…YHYH), 201 to 225 (LNHH…HIGA), 309 to 327 (IAHH…GHLY), 368 to 391 (RHAQ…HHMY), 407 to 433 (LGLF…IAMV), 455 to 477 (ALIS…LYIH), and 558 to 576 (LMIH…LILL). 2 residues coordinate [4Fe-4S] cluster: Cys600 and Cys609. Transmembrane regions (helical) follow at residues 616–637 (HVFL…HFSW) and 681–703 (ISMY…MFLF). Residue His692 coordinates divinylchlorophyll a'. Positions 700 and 708 each coordinate divinyl chlorophyll a. Residue Trp709 participates in phylloquinone binding. Residues 741 to 761 (AVGVAHFLLGGIATTWAFFHA) form a helical membrane-spanning segment.

Belongs to the PsaA/PsaB family. The PsaA/B heterodimer binds the P700 divinyl chlorophyll special pair and subsequent electron acceptors. PSI consists of a core antenna complex that captures photons, and an electron transfer chain that converts photonic excitation into a charge separation. The cyanobacterial PSI reaction center is composed of one copy each of PsaA,B,C,D,E,F,I,J,K,L,M and X, and forms trimeric complexes. PSI electron transfer chain: 5 divinyl chlorophyll a, 1 divinyl chlorophyll a', 2 phylloquinones and 3 4Fe-4S clusters. PSI core antenna: 90 divinyl chlorophyll a, 22 carotenoids, 3 phospholipids and 1 galactolipid. P700 is a divinyl chlorophyll a/divinyl chlorophyll a' dimer, A0 is one or more divinyl chlorophyll a, A1 is one or both phylloquinones and FX is a shared 4Fe-4S iron-sulfur center. serves as cofactor.

Its subcellular location is the cellular thylakoid membrane. It catalyses the reaction reduced [plastocyanin] + hnu + oxidized [2Fe-2S]-[ferredoxin] = oxidized [plastocyanin] + reduced [2Fe-2S]-[ferredoxin]. In terms of biological role, psaA and PsaB bind P700, the primary electron donor of photosystem I (PSI), as well as the electron acceptors A0, A1 and FX. PSI is a plastocyanin/cytochrome c6-ferredoxin oxidoreductase, converting photonic excitation into a charge separation, which transfers an electron from the donor P700 chlorophyll pair to the spectroscopically characterized acceptors A0, A1, FX, FA and FB in turn. Oxidized P700 is reduced on the lumenal side of the thylakoid membrane by plastocyanin or cytochrome c6. In Prochlorococcus marinus (strain MIT 9312), this protein is Photosystem I P700 chlorophyll a apoprotein A1.